The sequence spans 981 residues: Lateral signaling target protein 2 homolog (981 aa).

A disordered region spans residues P308–E462. Low complexity-rich tracts occupy residues T326–T356, N369–N380, S390–A404, and P412–W433. Residues S434 to E462 show a composition bias toward acidic residues. 2 positions are modified to phosphoserine: S544 and S545. Disordered stretches follow at residues E561–S642 and D749–A897. Over residues H576 to R611 the composition is skewed to basic residues. Residues L630 to S642 show a composition bias toward low complexity. Polar residues predominate over residues A760–A791. S805 is modified (phosphoserine). 2 stretches are compositionally biased toward low complexity: residues A811–A866 and P883–P896. The FYVE-type zinc-finger motif lies at D901 to V961. Residues C907, C910, C923, C926, C931, C934, C953, and C956 each contribute to the Zn(2+) site.

It belongs to the lst-2 family.

Its function is as follows. Negative regulator of epidermal growth factor receptor (EGFR) signaling. The sequence is that of Lateral signaling target protein 2 homolog from Drosophila erecta (Fruit fly).